A 340-amino-acid chain; its full sequence is uncharacterized protein (340 aa).

Positions 284 to 340 (DHSTPTNYQQETPASQQQLDQENEPIKPSKKSNSSSLPRGTTQPKSNSINRVSKLID) are disordered. Composition is skewed to polar residues over residues 286–303 (STPTNYQQETPASQQQLD) and 320–334 (LPRGTTQPKSNSINR).

This is an uncharacterized protein from Mycoplasma genitalium (strain ATCC 33530 / DSM 19775 / NCTC 10195 / G37) (Mycoplasmoides genitalium).